We begin with the raw amino-acid sequence, 388 residues long: CUE domain-containing protein 1 (388 aa).

Low complexity predominate over residues 1–10 (MTSLFRRSSS). Residues 1–45 (MTSLFRRSSSGSGGGGATGARGAGTGAGDGSTAPQELNNSRPARQ) form a disordered region. Residues 11 to 29 (GSGGGGATGARGAGTGAGD) are compositionally biased toward gly residues. In terms of domain architecture, CUE spans 50 to 93 (EFNQAMDDFKTMFPNMDYDIIECVLRANSGAVDATIDQLLQMNL). Disordered regions lie at residues 152-178 (PTPP…WNPP), 196-225 (DSIQ…ACDQ), 270-302 (SQKS…TVSE), and 369-388 (DFRG…REGQ). Residues 290–300 (VPGTSETNPTV) show a composition bias toward polar residues.

The chain is CUE domain-containing protein 1 (Cuedc1) from Mus musculus (Mouse).